The chain runs to 301 residues: uncharacterized protein (301 aa).

This sequence belongs to the asfivirus E301R family. Interacts with host IRF3.

Its function is as follows. Plays a role in the inhibition of host innate immune system by acting as a negatively regulator of type I interferon production. Mechanistically, interacts with and prevents host IRF3 nuclear localization to inhibit its transcriptional activity. This is an uncharacterized protein from African swine fever virus (strain Badajoz 1971 Vero-adapted) (Ba71V).